Consider the following 359-residue polypeptide: Peptide chain release factor 1 (359 aa).

Gln-235 is subject to N5-methylglutamine.

This sequence belongs to the prokaryotic/mitochondrial release factor family. Post-translationally, methylated by PrmC. Methylation increases the termination efficiency of RF1.

The protein localises to the cytoplasm. Functionally, peptide chain release factor 1 directs the termination of translation in response to the peptide chain termination codons UAG and UAA. The sequence is that of Peptide chain release factor 1 from Ehrlichia ruminantium (strain Gardel).